We begin with the raw amino-acid sequence, 186 residues long: Pyridoxal 5'-phosphate synthase subunit PdxT (186 aa).

L-glutamine is bound at residue 47–49 (GES). Residue C79 is the Nucleophile of the active site. Residues R106 and 134-135 (IR) contribute to the L-glutamine site. Residues H170 and E172 each act as charge relay system in the active site.

The protein belongs to the glutaminase PdxT/SNO family. As to quaternary structure, in the presence of PdxS, forms a dodecamer of heterodimers. Only shows activity in the heterodimer.

The enzyme catalyses aldehydo-D-ribose 5-phosphate + D-glyceraldehyde 3-phosphate + L-glutamine = pyridoxal 5'-phosphate + L-glutamate + phosphate + 3 H2O + H(+). It carries out the reaction L-glutamine + H2O = L-glutamate + NH4(+). Its pathway is cofactor biosynthesis; pyridoxal 5'-phosphate biosynthesis. Functionally, catalyzes the hydrolysis of glutamine to glutamate and ammonia as part of the biosynthesis of pyridoxal 5'-phosphate. The resulting ammonia molecule is channeled to the active site of PdxS. The polypeptide is Pyridoxal 5'-phosphate synthase subunit PdxT (Methanothrix thermoacetophila (strain DSM 6194 / JCM 14653 / NBRC 101360 / PT) (Methanosaeta thermophila)).